We begin with the raw amino-acid sequence, 453 residues long: tRNA-2-methylthio-N(6)-dimethylallyladenosine synthase (453 aa).

Residues 11–131 enclose the MTTase N-terminal domain; the sequence is KSFHVKSFGC…LPQLVADAAE (121 aa). 6 residues coordinate [4Fe-4S] cluster: cysteine 20, cysteine 56, cysteine 94, cysteine 167, cysteine 171, and cysteine 174. A Radical SAM core domain is found at 153-385; that stretch reads RRQGPTAFLT…QALLNEQQHR (233 aa). Positions 388 to 449 constitute a TRAM domain; that stretch reads LATVGKRCEV…PNSLSGALVE (62 aa).

Belongs to the methylthiotransferase family. MiaB subfamily. As to quaternary structure, monomer. [4Fe-4S] cluster serves as cofactor.

The protein localises to the cytoplasm. The enzyme catalyses N(6)-dimethylallyladenosine(37) in tRNA + (sulfur carrier)-SH + AH2 + 2 S-adenosyl-L-methionine = 2-methylsulfanyl-N(6)-dimethylallyladenosine(37) in tRNA + (sulfur carrier)-H + 5'-deoxyadenosine + L-methionine + A + S-adenosyl-L-homocysteine + 2 H(+). In terms of biological role, catalyzes the methylthiolation of N6-(dimethylallyl)adenosine (i(6)A), leading to the formation of 2-methylthio-N6-(dimethylallyl)adenosine (ms(2)i(6)A) at position 37 in tRNAs that read codons beginning with uridine. The sequence is that of tRNA-2-methylthio-N(6)-dimethylallyladenosine synthase from Rhizorhabdus wittichii (strain DSM 6014 / CCUG 31198 / JCM 15750 / NBRC 105917 / EY 4224 / RW1) (Sphingomonas wittichii).